We begin with the raw amino-acid sequence, 187 residues long: Oligoribonuclease (187 aa).

Residues 7-170 (LCWLDMEMTG…DDILESIEEM (164 aa)) enclose the Exonuclease domain. Tyr128 is an active-site residue.

Belongs to the oligoribonuclease family.

Its subcellular location is the cytoplasm. 3'-to-5' exoribonuclease specific for small oligoribonucleotides. In Neisseria meningitidis serogroup C / serotype 2a (strain ATCC 700532 / DSM 15464 / FAM18), this protein is Oligoribonuclease.